Consider the following 202-residue polypeptide: UPF0301 protein ML0028 (202 aa).

This sequence belongs to the UPF0301 (AlgH) family.

The sequence is that of UPF0301 protein ML0028 from Mycobacterium leprae (strain TN).